The sequence spans 82 residues: MPAIDVGRIAVIIAGRRAGQKCVIVDIIDKNFVLVTGAGLNKVKRRRMNIKHLEPLPEKIDIPRGASDEEVKAALEKAGISL.

It belongs to the eukaryotic ribosomal protein eL14 family.

The protein is Large ribosomal subunit protein eL14 of Pyrococcus abyssi (strain GE5 / Orsay).